Here is a 101-residue protein sequence, read N- to C-terminus: Acylphosphatase (101 aa).

The 89-residue stretch at 11-99 folds into the Acylphosphatase-like domain; sequence SWLVKAIGRV…PRLNRFDRLP (89 aa). Active-site residues include Arg26 and Asn44.

The protein belongs to the acylphosphatase family.

It carries out the reaction an acyl phosphate + H2O = a carboxylate + phosphate + H(+). In Polaromonas naphthalenivorans (strain CJ2), this protein is Acylphosphatase (acyP).